Here is a 320-residue protein sequence, read N- to C-terminus: Thioredoxin reductase (320 aa).

An FAD-binding site is contributed by 36 to 43 (TGMEQGGQ). C136 and C139 are joined by a disulfide. 287–296 (DVTDHVYRQA) is an FAD binding site.

It belongs to the class-II pyridine nucleotide-disulfide oxidoreductase family. As to quaternary structure, homodimer. FAD is required as a cofactor.

It localises to the cytoplasm. It catalyses the reaction [thioredoxin]-dithiol + NADP(+) = [thioredoxin]-disulfide + NADPH + H(+). This chain is Thioredoxin reductase (trxB), found in Coxiella burnetii (strain RSA 493 / Nine Mile phase I).